We begin with the raw amino-acid sequence, 440 residues long: Phosphatidylcholine-sterol acyltransferase (440 aa).

The signal sequence occupies residues 1–24; that stretch reads MGPPGSPWQWVTLLLGLLLPPAAP. N-linked (GlcNAc...) (complex) asparagine glycosylation occurs at N44. A disulfide bridge links C74 with C98. Residue N108 is glycosylated (N-linked (GlcNAc...) (complex) asparagine). Catalysis depends on S205, which acts as the Nucleophile. The N-linked (GlcNAc...) (complex) asparagine glycan is linked to N296. Cysteines 337 and 380 form a disulfide. Active-site charge relay system residues include D369 and H401. N-linked (GlcNAc...) (complex) asparagine glycosylation is present at N408. An O-linked (GalNAc...) threonine glycan is attached at T431. O-linked (GalNAc...) serine glycosylation is present at S433.

It belongs to the AB hydrolase superfamily. Lipase family. In terms of processing, O- and N-glycosylated. O-glycosylation on Thr-431 and Ser-433 consists of sialylated galactose beta 1--&gt;3N-acetylgalactosamine structures. N-glycosylated sites contain sialylated triantennary and/or biantennary complex structures. In terms of tissue distribution, detected in blood plasma. Detected in cerebral spinal fluid (at protein level). Detected in liver. Expressed mainly in brain, liver and testes.

It is found in the secreted. The enzyme catalyses a sterol + a 1,2-diacyl-sn-glycero-3-phosphocholine = a sterol ester + a 1-acyl-sn-glycero-3-phosphocholine. The catalysed reaction is a 1-O-alkyl-2-acetyl-sn-glycero-3-phosphocholine + H2O = a 1-O-alkyl-sn-glycero-3-phosphocholine + acetate + H(+). It carries out the reaction a 1-hexadecanoyl-2-acyl-sn-glycero-3-phosphocholine + (24S)-hydroxycholesterol = (24S)-24-hydroxycholesterol ester + 1-hexadecanoyl-sn-glycero-3-phosphocholine. It catalyses the reaction (24S)-hydroxycholesterol + 1-hexadecanoyl-2-(9Z,12Z-octadecadienoyl)-sn-glycero-3-phosphocholine = (24S)-hydroxycholesterol 3-linoleoate + 1-hexadecanoyl-sn-glycero-3-phosphocholine. The enzyme catalyses 1-hexadecanoyl-2-(5Z,8Z,11Z,14Z-eicosatetraenoyl)-sn-glycero-3-phosphocholine + cholesterol = cholesteryl (5Z,8Z,11Z,14Z)-eicosatetraenoate + 1-hexadecanoyl-sn-glycero-3-phosphocholine. The catalysed reaction is 1-hexadecanoyl-2-(9Z-octadecenoyl)-sn-glycero-3-phosphocholine + cholesterol = cholesteryl (9Z-octadecenoate) + 1-hexadecanoyl-sn-glycero-3-phosphocholine. It carries out the reaction 1-hexadecanoyl-2-(8Z,11Z,14Z-eicosatrienoyl)-sn-glycero-3-phosphocholine + cholesterol = cholesteryl (8Z,11Z,14Z)-eicosatrienoate + 1-hexadecanoyl-sn-glycero-3-phosphocholine. It catalyses the reaction 1-hexadecanoyl-2-(5Z,8Z,11Z-eicosatrienoyl)-sn-glycero-3-phosphocholine + cholesterol = cholesteryl (5Z,8Z,11Z)-eicosatrienoate + 1-hexadecanoyl-sn-glycero-3-phosphocholine. The enzyme catalyses 1-hexadecanoyl-2-(5Z,8Z,11Z,14Z,17Z-eicosapentaenoyl)-sn-glycero-3-phosphocholine + cholesterol = (5Z,8Z,11Z,14Z,17Z-eicosapentaenoyl)-cholesterol + 1-hexadecanoyl-sn-glycero-3-phosphocholine. The catalysed reaction is 1-hexadecanoyl-2-(9Z,12Z-octadecadienoyl)-sn-glycero-3-phosphocholine + cholesterol = cholesteryl (9Z,12Z)-octadecadienoate + 1-hexadecanoyl-sn-glycero-3-phosphocholine. It carries out the reaction 1-hexadecanoyl-2-(6Z,9Z,12Z-octadecatrienoyl)-sn-glycero-3-phosphocholine + cholesterol = (6Z,9Z,12Z-octadecatrienoyl)-cholesterol + 1-hexadecanoyl-sn-glycero-3-phosphocholine. It catalyses the reaction 1-hexadecanoyl-2-(11Z,14Z,17Z-eicosatrienoyl)-sn-glycero-3-phosphocholine + cholesterol = (11Z,14Z,17Z-eicosatrienoyl)-cholesterol + 1-hexadecanoyl-sn-glycero-3-phosphocholine. The enzyme catalyses 1-hexadecanoyl-2-(9Z,12Z,15Z-octadecatrienoyl)-sn-glycero-3-phosphocholine + cholesterol = (9Z,12Z,15Z-octadecatrienoyl)-cholesterol + 1-hexadecanoyl-sn-glycero-3-phosphocholine. The catalysed reaction is 1-hexadecanoyl-2-(9Z,12Z-octadecadienoyl)-sn-glycero-3-phosphocholine + H2O = (9Z,12Z)-octadecadienoate + 1-hexadecanoyl-sn-glycero-3-phosphocholine + H(+). It carries out the reaction 1-hexadecanoyl-2-(5Z,8Z,11Z,14Z-eicosatetraenoyl)-sn-glycero-3-phosphocholine + H2O = 1-hexadecanoyl-sn-glycero-3-phosphocholine + (5Z,8Z,11Z,14Z)-eicosatetraenoate + H(+). It catalyses the reaction a 1-O-alkyl-2-acetyl-sn-glycero-3-phosphocholine + 1-hexadecanoyl-sn-glycero-3-phosphocholine = 1-hexadecanoyl-2-acetyl-sn-glycero-3-phosphocholine + a 1-O-alkyl-sn-glycero-3-phosphocholine. APOA1 is the most potent activator in plasma. Also activated by APOE, APOC1 and APOA4. Inhibited by haptoglobin and 5,5'-dithiobis-(2-nitrobenzoic acid) (DTNB). In terms of biological role, central enzyme in the extracellular metabolism of plasma lipoproteins. Synthesized mainly in the liver and secreted into plasma where it converts cholesterol and phosphatidylcholines (lecithins) to cholesteryl esters and lysophosphatidylcholines on the surface of high and low density lipoproteins (HDLs and LDLs). The cholesterol ester is then transported back to the liver. Has a preference for plasma 16:0-18:2 or 18:O-18:2 phosphatidylcholines. Also produced in the brain by primary astrocytes, and esterifies free cholesterol on nascent APOE-containing lipoproteins secreted from glia and influences cerebral spinal fluid (CSF) APOE- and APOA1 levels. Together with APOE and the cholesterol transporter ABCA1, plays a key role in the maturation of glial-derived, nascent lipoproteins. Required for remodeling high-density lipoprotein particles into their spherical forms. Catalyzes the hydrolysis of 1-O-alkyl-2-acetyl-sn-glycero-3-phosphocholine (platelet-activating factor or PAF) to 1-O-alkyl-sn-glycero-3-phosphocholine (lyso-PAF). Also catalyzes the transfer of the acetate group from PAF to 1-hexadecanoyl-sn-glycero-3-phosphocholine forming lyso-PAF. Catalyzes the esterification of (24S)-hydroxycholesterol (24(S)OH-C), also known as cerebrosterol to produce 24(S)OH-C monoesters. This chain is Phosphatidylcholine-sterol acyltransferase (LCAT), found in Homo sapiens (Human).